Reading from the N-terminus, the 337-residue chain is Serpentine receptor class delta-50 (337 aa).

7 consecutive transmembrane segments (helical) span residues 10 to 30 (VLIL…SQLL), 48 to 68 (IYLF…FVLQ), 107 to 127 (VLFH…IIAF), 147 to 167 (QLVI…LSPN), 202 to 222 (SSQT…ALVF), 250 to 270 (GLTL…TYYI), and 280 to 300 (LFVE…DPLL).

It belongs to the nematode receptor-like protein srd family.

It is found in the membrane. This is Serpentine receptor class delta-50 from Caenorhabditis elegans.